The primary structure comprises 95 residues: Large ribosomal subunit protein uL23 (95 aa).

This sequence belongs to the universal ribosomal protein uL23 family. Part of the 50S ribosomal subunit. Contacts protein L29, and trigger factor when it is bound to the ribosome.

Functionally, one of the early assembly proteins it binds 23S rRNA. One of the proteins that surrounds the polypeptide exit tunnel on the outside of the ribosome. Forms the main docking site for trigger factor binding to the ribosome. This is Large ribosomal subunit protein uL23 from Fusobacterium nucleatum subsp. nucleatum (strain ATCC 25586 / DSM 15643 / BCRC 10681 / CIP 101130 / JCM 8532 / KCTC 2640 / LMG 13131 / VPI 4355).